Reading from the N-terminus, the 86-residue chain is Cell division topological specificity factor (86 aa).

The protein belongs to the MinE family.

Its function is as follows. Prevents the cell division inhibition by proteins MinC and MinD at internal division sites while permitting inhibition at polar sites. This ensures cell division at the proper site by restricting the formation of a division septum at the midpoint of the long axis of the cell. The protein is Cell division topological specificity factor of Stenotrophomonas maltophilia (strain R551-3).